The primary structure comprises 340 residues: GTP 3',8-cyclase (340 aa).

The region spanning 20–246 (RFQRQYTYLR…PKAVNDGPAK (227 aa)) is the Radical SAM core domain. Arg29 contributes to the GTP binding site. The [4Fe-4S] cluster site is built by Cys36 and Cys40. Tyr42 contacts S-adenosyl-L-methionine. Cys43 provides a ligand contact to [4Fe-4S] cluster. Arg79 is a GTP binding site. Residue Gly83 participates in S-adenosyl-L-methionine binding. GTP is bound at residue Thr110. Ser134 is an S-adenosyl-L-methionine binding site. Lys171 serves as a coordination point for GTP. An S-adenosyl-L-methionine-binding site is contributed by Met205. [4Fe-4S] cluster-binding residues include Cys268 and Cys271. 273 to 275 (RLR) is a GTP binding site. Cys285 contacts [4Fe-4S] cluster.

This sequence belongs to the radical SAM superfamily. MoaA family. As to quaternary structure, monomer and homodimer. [4Fe-4S] cluster serves as cofactor.

The enzyme catalyses GTP + AH2 + S-adenosyl-L-methionine = (8S)-3',8-cyclo-7,8-dihydroguanosine 5'-triphosphate + 5'-deoxyadenosine + L-methionine + A + H(+). It participates in cofactor biosynthesis; molybdopterin biosynthesis. In terms of biological role, catalyzes the cyclization of GTP to (8S)-3',8-cyclo-7,8-dihydroguanosine 5'-triphosphate. The chain is GTP 3',8-cyclase from Haemophilus ducreyi (strain 35000HP / ATCC 700724).